Reading from the N-terminus, the 360-residue chain is Phospho-N-acetylmuramoyl-pentapeptide-transferase (360 aa).

10 consecutive transmembrane segments (helical) span residues 26–46 (AILGLLTALMFSLWWGPKLIE), 74–94 (MGGLMILGAIFISVLLWGDLG), 97–117 (YVWVMLFVLGSFGMIGFIDDY), 132–152 (WKYILQSLAALIIAFFLYTTA), 168–188 (VMPQLGAVFIVLAYFTIVGSS), 199–219 (GLAIMPTVMVAAAFALIAYLS), 236–256 (SGELVIVCTAIVGAGLGFLWF), 263–283 (VFMGDVGSLSLGAALGAIAVL), 288–308 (ILLVIMGGVFVMETVSVILQV), and 338–358 (VIVRFWIISIFLVLLGLATLK).

This sequence belongs to the glycosyltransferase 4 family. MraY subfamily. It depends on Mg(2+) as a cofactor.

Its subcellular location is the cell inner membrane. It carries out the reaction UDP-N-acetyl-alpha-D-muramoyl-L-alanyl-gamma-D-glutamyl-meso-2,6-diaminopimeloyl-D-alanyl-D-alanine + di-trans,octa-cis-undecaprenyl phosphate = di-trans,octa-cis-undecaprenyl diphospho-N-acetyl-alpha-D-muramoyl-L-alanyl-D-glutamyl-meso-2,6-diaminopimeloyl-D-alanyl-D-alanine + UMP. It participates in cell wall biogenesis; peptidoglycan biosynthesis. In terms of biological role, catalyzes the initial step of the lipid cycle reactions in the biosynthesis of the cell wall peptidoglycan: transfers peptidoglycan precursor phospho-MurNAc-pentapeptide from UDP-MurNAc-pentapeptide onto the lipid carrier undecaprenyl phosphate, yielding undecaprenyl-pyrophosphoryl-MurNAc-pentapeptide, known as lipid I. This Shewanella sp. (strain ANA-3) protein is Phospho-N-acetylmuramoyl-pentapeptide-transferase.